The chain runs to 481 residues: Chromosomal replication initiator protein DnaA (481 aa).

The domain I, interacts with DnaA modulators stretch occupies residues 1–71 (MTDLSAFWPQ…ETFAEDILGR (71 aa)). Positions 71–143 (RPVTIELRIG…PAIGGGHEST (73 aa)) are domain II. Residues 86-96 (ASAPAAASPRS) are compositionally biased toward low complexity. The tract at residues 86–110 (ASAPAAASPRSPGRPAPAPVAATPT) is disordered. Residues 144 to 361 (RLNPAFTFES…GALKRVVAYS (218 aa)) form a domain III, AAA+ region region. ATP is bound by residues glycine 189, glycine 191, lysine 192, and threonine 193. The interval 362-481 (RFSNQPISLD…YAALQQMLRN (120 aa)) is domain IV, binds dsDNA.

Belongs to the DnaA family. Oligomerizes as a right-handed, spiral filament on DNA at oriC.

Its subcellular location is the cytoplasm. Functionally, plays an essential role in the initiation and regulation of chromosomal replication. ATP-DnaA binds to the origin of replication (oriC) to initiate formation of the DNA replication initiation complex once per cell cycle. Binds the DnaA box (a 9 base pair repeat at the origin) and separates the double-stranded (ds)DNA. Forms a right-handed helical filament on oriC DNA; dsDNA binds to the exterior of the filament while single-stranded (ss)DNA is stabiized in the filament's interior. The ATP-DnaA-oriC complex binds and stabilizes one strand of the AT-rich DNA unwinding element (DUE), permitting loading of DNA polymerase. After initiation quickly degrades to an ADP-DnaA complex that is not apt for DNA replication. Binds acidic phospholipids. The polypeptide is Chromosomal replication initiator protein DnaA (Laribacter hongkongensis (strain HLHK9)).